The following is a 2476-amino-acid chain: Zonadhesin (2476 aa).

The N-terminal stretch at 1–29 (MLGLPALAGPMAMPHPPLIPSTPTLLAFS) is a signal peptide. Over 30 to 2418 (FPGGFYMLLD…SPKKPEASNR (2389 aa)) the chain is Extracellular. MAM domains are found at residues 31 to 144 (PGGF…PCEE) and 147 to 312 (PQCD…TCRG). N-linked (GlcNAc...) asparagine glycans are attached at residues Asn109 and Asn269. Disordered stretches follow at residues 313–332 (PSET…KPTV), 358–462 (PTVP…TERT), and 537–632 (ERTT…RTTI). Residues 319–687 (STEKPVAPTE…ATTVTPRTTI (369 aa)) are 53 X approximate heptapeptide repeats (mucin-like domain). Residues 358–373 (PTVPTEKPTIPTEKST) show a composition bias toward low complexity. The segment covering 400 to 412 (TTPPEGPAVPPKG) has biased composition (pro residues). Basic and acidic residues predominate over residues 423–433 (HTEKSTVHTEK). Residues 451–462 (PTKRTTTPTERT) show a composition bias toward low complexity. Positions 690-739 (CPPNAHFERCACPVSCQSPTPNCELFCKPGCVCDPGFLFSGSHCVNASSC) constitute a TIL 1 domain. Residues Asn735, Asn758, and Asn833 are each glycosylated (N-linked (GlcNAc...) asparagine). A VWFC 1 domain is found at 740–794 (DCFYNDNYYKLGTDWFSPNCTEHCHCRPSSRMECQTFKCGTHTVCQLKNGQYGCH). A VWFD 1 domain is found at 799-976 (ATCSVYGDPH…TSEDADQQCE (178 aa)). Cystine bridges form between Cys801–Cys936 and Cys823–Cys975. The tract at residues 943 to 983 (SSNDNQKPDGSPAKDEKELGSSWQTSEDADQQCEENQVSPP) is disordered. Positions 1070–1123 (CPRNSRYTLCARLCPDTCHSEFSGRACKDRCVEGCECDPGFVLSGLQCVSRSEC) constitute a TIL 2 domain. One can recognise a VWFC 2 domain in the interval 1124–1180 (GCLDSTAGYVKVGERWFKPGCRQLCICEGNNRTRCVLWRCQAQEFCGQQDGIYGCHA). N-linked (GlcNAc...) asparagine glycosylation occurs at Asn1154. The VWFD 2 domain maps to 1184–1364 (ATCTVSGDPH…INELSEPGCF (181 aa)). 2 disulfide bridges follow: Cys1186–Cys1324 and Cys1208–Cys1363. Asn1329 and Asn1448 each carry an N-linked (GlcNAc...) asparagine glycan. The TIL 3 domain maps to 1456 to 1511 (CPSGSSYSTCANPCPATCLSLNNPSYCPSTLPCAEGCECQKGHILSGTSCVPLSQC). Positions 1512-1568 (GCTTQRGSYHPVGESWYTDNSCSRLCTCSAHNNISCRQASCKPSQMCWPQDGLIRCR) constitute a VWFC 3 domain. Asn1544, Asn1596, and Asn1654 each carry an N-linked (GlcNAc...) asparagine glycan. A VWFD 3 domain is found at 1573–1751 (GVCRIPDTSH…RDKEIDPNCQ (179 aa)). 2 cysteine pairs are disulfide-bonded: Cys1575-Cys1712 and Cys1597-Cys1750. Positions 1747 to 1759 (DPNCQEDDRKTEA) are enriched in basic and acidic residues. A disordered region spans residues 1747–1768 (DPNCQEDDRKTEAESQEQPSAN). A glycan (N-linked (GlcNAc...) asparagine) is linked at Asn1843. The TIL 4 domain occupies 1851 to 1907 (CSAHSVYTSCVPSCLPSCQDPEGQCTGAGAPSTCEEGCICEPGYVLSEQQCVARSQC). In terms of domain architecture, VWFC 4 spans 1908-1963 (GCRDARGTFLPVGRFRLSSGCSQMCVCTAGAIECRPFTCPSGSQCEPNEDGKDFCQ). An N-linked (GlcNAc...) asparagine glycan is attached at Asn1965. The 178-residue stretch at 1968 to 2145 (NLCSVFGDPH…WEVKAKEGHP (178 aa)) folds into the VWFD 4 domain. Cys1970 and Cys2107 are joined by a disulfide. N-linked (GlcNAc...) asparagine glycans are attached at residues Asn2122, Asn2165, and Asn2178. The 54-residue stretch at 2257–2310 (CPANTVYQSCMTPCPASCATLAVPRACDGPCVEGCASLPGYIYSGAQSLPMAHC) folds into the TIL 5 domain. The VWFC 5 domain occupies 2311–2365 (GCTNNGVYYQQGDSFVTENCSQRCTCASSGVLLCEPLSCRPGEICTLGNLTRGCF). 2 N-linked (GlcNAc...) asparagine glycosylation sites follow: Asn2329 and Asn2359. The 37-residue stretch at 2366 to 2402 (RDSPCLQNPCQNDGRCREQGTHFTCECELGYGGDLCT) folds into the EGF-like domain. 3 disulfide bridges follow: Cys2370-Cys2381, Cys2375-Cys2390, and Cys2392-Cys2401. A helical membrane pass occupies residues 2419 to 2439 (VAILLGMLMPTVLLVPAVTRV). The interval 2438–2476 (RVSRKRRRRRRPSRERTQSQNRGKRAGTDCAPEQAYKVA) is disordered. The segment covering 2439 to 2450 (VSRKRRRRRRPS) has biased composition (basic residues). Topologically, residues 2440 to 2476 (SRKRRRRRRPSRERTQSQNRGKRAGTDCAPEQAYKVA) are cytoplasmic.

As to quaternary structure, probably forms covalent oligomers. In terms of processing, the MAM domains and the mucin-like domains are missing from the zonadhesin that binds to the egg extracellular matrix. Processing might occur during sperm maturation and/or capacitation. In terms of tissue distribution, in testis, primarily in haploid spermatids. Not in lung, liver, heart, spleen, brain, kidney, epididymis.

Its subcellular location is the cell membrane. In terms of biological role, binds in a species-specific manner to the zona pellucida of the egg. May be involved in gamete recognition and/or signaling. In Sus scrofa (Pig), this protein is Zonadhesin (ZAN).